The primary structure comprises 188 residues: Cell division protein SepF (188 aa).

The disordered stretch occupies residues 29–53 (EQQDQDQRATQADGGALATLGDSNP).

Belongs to the SepF family. As to quaternary structure, homodimer. Interacts with FtsZ.

It localises to the cytoplasm. Functionally, cell division protein that is part of the divisome complex and is recruited early to the Z-ring. Probably stimulates Z-ring formation, perhaps through the cross-linking of FtsZ protofilaments. Its function overlaps with FtsA. This chain is Cell division protein SepF, found in Synechococcus sp. (strain CC9902).